Consider the following 516-residue polypeptide: Sodium channel protein Nach (516 aa).

Residues 1 to 49 (MGHEEELSPEQVDLKVSPLMGSLKRTWNDFCATSSIHGLRYTRDEDTNR) lie on the Cytoplasmic side of the membrane. A helical transmembrane segment spans residues 50-70 (IVHFVWLLISLVMFICAVVMA). Residues 71–452 (RTFYIDFRSN…LVSNLGSAFS (382 aa)) are Extracellular-facing. N-linked (GlcNAc...) asparagine glycosylation is found at asparagine 128, asparagine 165, asparagine 220, and asparagine 348. A helical membrane pass occupies residues 453 to 473 (LFVGMSMLSVVEIMYYFSVIL). Over 474–516 (RKNYVLECEARKKMLHKGPKFAWPKANDSHSKHQKSVFIIHKM) the chain is Cytoplasmic.

This sequence belongs to the amiloride-sensitive sodium channel (TC 1.A.6) family.

It is found in the membrane. In terms of biological role, part of a complex that plays a role in tracheal liquid clearance. Probable role in sodium transport. This Drosophila ananassae (Fruit fly) protein is Sodium channel protein Nach (Nach).